A 308-amino-acid chain; its full sequence is Taste receptor type 2 member 41 (308 aa).

The Extracellular portion of the chain corresponds to 1–7 (MLPTLSV). The chain crosses the membrane as a helical span at residues 8 to 28 (FFMLTFVLLCFLGILANGFIV). Residues 29–60 (LMLSREWLLRGRLLPSDMILFSLGTSRFFQQC) are Cytoplasmic-facing. The helical transmembrane segment at 61–81 (VGLVNSFYYFLHLVEYSGSLA) threads the bilayer. Residues 82 to 88 (RQLISLH) lie on the Extracellular side of the membrane. A helical membrane pass occupies residues 89 to 109 (WDFLNSATFWFCTWLSVLFCI). Over 110 to 128 (KIANFSHPAFLWLKWRFPA) the chain is Cytoplasmic. The chain crosses the membrane as a helical span at residues 129-149 (LVPWFLLGSILVSVIVTLLFF). Residues 150 to 186 (WGNHTIYQAFLRRKFTGNTTFKEWNRRLEIDYFMPLK) lie on the Extracellular side of the membrane. N-linked (GlcNAc...) asparagine glycosylation is found at Asn-152 and Asn-167. Residues 187–207 (VVTMSIPCSLFLVSILLLISS) traverse the membrane as a helical segment. Over 208 to 239 (LRRHSLRMQHNTHSLQDPNVQAHSRALKSLIS) the chain is Cytoplasmic. A helical transmembrane segment spans residues 240–260 (FLVLYAVSFVSMIIDATVFIS). Residues 261 to 264 (SDNV) lie on the Extracellular side of the membrane. The chain crosses the membrane as a helical span at residues 265-285 (WYWPWQIILYFCMSVHPFILI). Residues 286-308 (TNNLRFRGTFRQLLLLARGFWVA) are Cytoplasmic-facing.

Belongs to the G-protein coupled receptor T2R family. As to expression, expressed in subsets of taste receptor cells of the tongue and palate epithelium and exclusively in gustducin-positive cells.

Its subcellular location is the membrane. Functionally, receptor that may play a role in the perception of bitterness and is gustducin-linked. May play a role in sensing the chemical composition of the gastrointestinal content. The activity of this receptor may stimulate alpha gustducin, mediate PLC-beta-2 activation and lead to the gating of TRPM5. In Mus musculus (Mouse), this protein is Taste receptor type 2 member 41 (Tas2r41).